A 92-amino-acid polypeptide reads, in one-letter code: Small ribosomal subunit protein uS19 (92 aa).

It belongs to the universal ribosomal protein uS19 family.

In terms of biological role, protein S19 forms a complex with S13 that binds strongly to the 16S ribosomal RNA. This Nostoc sp. (strain PCC 7120 / SAG 25.82 / UTEX 2576) protein is Small ribosomal subunit protein uS19.